Here is a 366-residue protein sequence, read N- to C-terminus: Elongation factor Ts, mitochondrial (366 aa).

The transit peptide at 1–50 (MAWSQSARKPMIGLLFRAQQHSARGYSYSAFQAHLSSSNVDQSATLLRRF) directs the protein to the mitochondrion.

Belongs to the EF-Ts family.

It is found in the mitochondrion. Functionally, associates with the EF-Tu.GDP complex and induces the exchange of GDP to GTP. It remains bound to the aminoacyl-tRNA.EF-Tu.GTP complex up to the GTP hydrolysis stage on the ribosome. This Oryza sativa subsp. japonica (Rice) protein is Elongation factor Ts, mitochondrial.